A 480-amino-acid polypeptide reads, in one-letter code: M-phase inducer phosphatase cdc-25.2 (480 aa).

Polar residues predominate over residues 1-20 (MNRPSQISQDVAQPLSNQHE). The disordered stretch occupies residues 1-35 (MNRPSQISQDVAQPLSNQHETAMMSSDEDSMSRDS). Positions 243-349 (FDDKYILIDC…FFFAANEANI (107 aa)) constitute a Rhodanese domain. Residues 411 to 452 (TSAPSTSTENIDTNDDCQKSRTPAVPRIASRRNLFSDPSHSP) are disordered.

Belongs to the MPI phosphatase family.

The enzyme catalyses O-phospho-L-tyrosyl-[protein] + H2O = L-tyrosyl-[protein] + phosphate. Required for intestinal cell division following the 16E cell stage of embryogenesis. Regulates intestinal cell divisions and binucleations probably by modulating the activity of the cell cycle regulator wee-1.3 and by activating the cdk-1/cyb-1 complex. Plays a role in male tail development, via regulation of the cell divisions of the ray precursor cell lineages, perhaps acting together with cell cycle regulators cyl-1, cdk-1, cyb-3, and cyd-1. This is M-phase inducer phosphatase cdc-25.2 from Caenorhabditis elegans.